A 393-amino-acid chain; its full sequence is Protein TsgA (393 aa).

12 helical membrane-spanning segments follow: residues 11–31, 51–71, 78–98, 101–121, 134–154, 162–182, 206–226, 245–265, 273–293, 298–318, 332–352, and 361–381; these read WISF…GMVM, FLNA…EIVP, FGFI…SLAL, AAMF…TFLI, LLFT…VAAF, WYWV…LTFG, IGVL…LGFI, ALVS…SFIL, ILTV…TGTQ, WFIL…ITLG, FILT…GPIV, and LLTA…LGFV.

This sequence belongs to the major facilitator superfamily. TsgA family.

It is found in the cell inner membrane. The chain is Protein TsgA from Salmonella gallinarum (strain 287/91 / NCTC 13346).